Consider the following 417-residue polypeptide: Dihydrolipoyllysine-residue succinyltransferase component of 2-oxoglutarate dehydrogenase complex (417 aa).

A Lipoyl-binding domain is found at 1–76; it reads MAEIKVPELA…QVGEIIGTIS (76 aa). At Lys42 the chain carries N6-lipoyllysine. Positions 75–191 are disordered; it reads ISEGAGESSA…SFDKPVEVQK (117 aa). Composition is skewed to basic and acidic residues over residues 89–103 and 152–163; these read EKTESKESVKEEKQA and RKQDVEAYEKPA. The Peripheral subunit-binding (PSBD) domain maps to 123–160; it reads IASPSARKLAREKGIDLSQVPTGDPLGRVRKQDVEAYE. The span at 164 to 182 shows a compositional bias: low complexity; it reads SKPAPQQKQQPQAQKAQQS. Catalysis depends on residues His388 and Asp392.

This sequence belongs to the 2-oxoacid dehydrogenase family. As to quaternary structure, forms a 24-polypeptide structural core with octahedral symmetry. Part of the 2-oxoglutarate dehydrogenase (OGDH) complex composed of E1 (2-oxoglutarate dehydrogenase), E2 (dihydrolipoamide succinyltransferase) and E3 (dihydrolipoamide dehydrogenase); the complex contains multiple copies of the three enzymatic components (E1, E2 and E3). (R)-lipoate is required as a cofactor.

It carries out the reaction N(6)-[(R)-dihydrolipoyl]-L-lysyl-[protein] + succinyl-CoA = N(6)-[(R)-S(8)-succinyldihydrolipoyl]-L-lysyl-[protein] + CoA. The protein operates within amino-acid degradation; L-lysine degradation via saccharopine pathway; glutaryl-CoA from L-lysine: step 6/6. Functionally, E2 component of the 2-oxoglutarate dehydrogenase (OGDH) complex which catalyzes the second step in the conversion of 2-oxoglutarate to succinyl-CoA and CO(2). The polypeptide is Dihydrolipoyllysine-residue succinyltransferase component of 2-oxoglutarate dehydrogenase complex (odhB) (Bacillus subtilis (strain 168)).